Reading from the N-terminus, the 602-residue chain is MFS-type efflux transporter pyiT (602 aa).

The segment at 1–33 (MEKAKDSLPTTGDPVPSQGTINPVDETGGSASD) is disordered. 7 consecutive transmembrane segments (helical) span residues 43–63 (FWFT…EGSV), 123–143 (WLTI…GGAT), 156–176 (GLGS…LLPL), 185–205 (IIFM…GILV), 212–232 (WVFY…FFFL), 251–271 (FFGN…LTYG), and 282–302 (IIVS…FEAS). The N-linked (GlcNAc...) asparagine glycan is linked to Asn317. 6 helical membrane passes run 325–345 (IATF…PLYF), 357–377 (GVML…GGAL), 386–406 (NIHF…TILN), 410–430 (SLAV…VPTA), 451–471 (TFAF…AAIF), and 524–544 (LERV…VIFL). Over residues 564–585 (IPQTAADNSASRPNTINDTASQ) the composition is skewed to polar residues. A disordered region spans residues 564–602 (IPQTAADNSASRPNTINDTASQAPILKQRRSTNQERETV). N-linked (GlcNAc...) asparagine glycosylation is present at Asn580.

The protein belongs to the major facilitator superfamily.

The protein resides in the cell membrane. In terms of biological role, MFS-type efflux transporter; part of the gene cluster that mediates the biosynthesis of the mycotoxin pyrichalasin H, a tyrosine-derived cytochalasan that inhibits the growth of rice seedlings, but also inhibits lymphocyte capping and actin polymerization and alters cell morphology. Pyrichalasin H is indicated as the responsible agent for the genus-specific pathogenicity of M.grisea toward crabgrass. PyiT might be involved in the excretion of pyrichalasin H. The chain is MFS-type efflux transporter pyiT from Pyricularia grisea (Crabgrass-specific blast fungus).